Reading from the N-terminus, the 350-residue chain is Casein kinase II subunit alpha' (350 aa).

A Phosphotyrosine modification is found at Tyr13. Phosphoserine is present on residues Ser18 and Ser21. The Protein kinase domain maps to 40–325 (YQLVRKLGRG…AKEAMEHPYF (286 aa)). ATP-binding positions include 46–54 (LGRGKYSEV) and Lys69. At Lys97 the chain carries N6-acetyllysine. Asp157 (proton acceptor) is an active-site residue. A Phosphoserine modification is found at Ser288.

This sequence belongs to the protein kinase superfamily. Ser/Thr protein kinase family. CK2 subfamily. As to quaternary structure, heterotetramer composed of two catalytic subunits (alpha chain and/or alpha' chain) and two regulatory subunits (beta chains). The tetramer can exist as a combination of 2 alpha/2 beta, 2 alpha'/2 beta or 1 alpha/1 alpha'/2 beta subunits. Also part of a CK2-SPT16-SSRP1 complex composed of SSRP1, SUPT16H, CSNK2A1, CSNK2A2 and CSNK2B, which forms following UV irradiation. Interacts with RNPS1. Interacts with CSNK2A2IP (via C-terminus). Interacts with SIRT6; preventing CSNK2A2 localization to the nucleus. Interacts with HIRIP3. In terms of tissue distribution, highly expressed in brain, testis and mature epididymal spermatozoa. Weakly expressed in kidney, liver, lung, spleen and thymus (at protein level).

The protein resides in the nucleus. The protein localises to the cytoplasm. It catalyses the reaction L-seryl-[protein] + ATP = O-phospho-L-seryl-[protein] + ADP + H(+). It carries out the reaction L-threonyl-[protein] + ATP = O-phospho-L-threonyl-[protein] + ADP + H(+). Constitutively active protein kinase whose activity is not directly affected by phosphorylation. Seems to be regulated by level of expression and localization. Functionally, catalytic subunit of a constitutively active serine/threonine-protein kinase complex that phosphorylates a large number of substrates containing acidic residues C-terminal to the phosphorylated serine or threonine. Regulates numerous cellular processes, such as cell cycle progression, apoptosis and transcription, as well as viral infection. May act as a regulatory node which integrates and coordinates numerous signals leading to an appropriate cellular response. During mitosis, functions as a component of the p53/TP53-dependent spindle assembly checkpoint (SAC) that maintains cyclin-B-CDK1 activity and G2 arrest in response to spindle damage. Also required for p53/TP53-mediated apoptosis, phosphorylating 'Ser-392' of p53/TP53 following UV irradiation. Phosphorylates a number of DNA repair proteins in response to DNA damage, such as MDC1, RAD9A, RAD51 and HTATSF1, promoting their recruitment to DNA damage sites. Can also negatively regulate apoptosis. Phosphorylates the caspases CASP9 and CASP2 and the apoptotic regulator NOL3. Phosphorylation protects CASP9 from cleavage and activation by CASP8, and inhibits the dimerization of CASP2 and activation of CASP8. Regulates transcription by direct phosphorylation of RNA polymerases I, II, III and IV. Also phosphorylates and regulates numerous transcription factors including NF-kappa-B, STAT1, CREB1, IRF1, IRF2, ATF1, SRF, MAX, JUN, FOS, MYC and MYB. Phosphorylates Hsp90 and its co-chaperones FKBP4 and CDC37, which is essential for chaperone function. Regulates Wnt signaling by phosphorylating CTNNB1 and the transcription factor LEF1. Acts as an ectokinase that phosphorylates several extracellular proteins. May phosphorylate histone H2A on 'Ser-1'. The sequence is that of Casein kinase II subunit alpha' (Csnk2a2) from Mus musculus (Mouse).